Reading from the N-terminus, the 583-residue chain is Transmembrane protein 108 (583 aa).

A helical transmembrane segment spans residues 7–27; the sequence is ALYCQLLSFLLTLALTEALVF. The interval 31–176 is interacts with SH3GL2; sequence EPSPRESLQV…ATIRRPPRPP (146 aa). 2 disordered regions span residues 71–360 and 376–404; these read VTPT…GVFA and VPSE…STVS. Polar residues-rich tracts occupy residues 80–93 and 100–122; these read PSSQ…TTTP and PTNT…SLST. A compositionally biased stretch (low complexity) spans 177–187; it reads GSSRKGAGSSP. An interacts with DST (isoform 1) region spans residues 180-413; sequence RKGAGSSPRP…SQAEEKAVAT (234 aa). Composition is skewed to polar residues over residues 251–273, 310–319, and 333–357; these read YSSS…SWVP, ASGTPASQQR, and DGSS…TNSG. A helical transmembrane segment spans residues 477–497; sequence IAWVILAISVPISSCSVLLTV. Residues 498–583 are interaction with CYFIP2; it reads CCLRRKKKPA…FVGNDQVSEI (86 aa).

As to quaternary structure, interacts with DST (isoform 1). Interacts with SH3GL2. Interacts (via N-terminus) with CYFIP1 and CYFIP2; the interactions associate TMEM108 with the WAVE1 complex. Post-translationally, glycosylated.

The protein resides in the membrane. It is found in the postsynaptic density. It localises to the endosome membrane. The protein localises to the cell projection. Its subcellular location is the axon. The protein resides in the dendrite. It is found in the early endosome. Functionally, transmembrane protein required for proper cognitive functions. Involved in the development of dentate gyrus (DG) neuron circuitry, is necessary for AMPA receptors surface expression and proper excitatory postsynaptic currents of DG granule neurons. Regulates the organization and stability of the microtubule network of sensory neurons to allow axonal transport. Through the interaction with DST, mediates the docking of the dynein/dynactin motor complex to vesicle cargos for retrograde axonal transport. In hippocampal neurons, required for BDNF-dependent dendrite outgrowth. Cooperates with SH3GL2 and recruits the WAVE1 complex to facilitate actin-dependent BDNF:NTRK2 early endocytic trafficking and mediate signaling from early endosomes. The protein is Transmembrane protein 108 of Bos taurus (Bovine).